The sequence spans 152 residues: Putative pre-16S rRNA nuclease (152 aa).

Belongs to the YqgF nuclease family.

The protein localises to the cytoplasm. In terms of biological role, could be a nuclease involved in processing of the 5'-end of pre-16S rRNA. This chain is Putative pre-16S rRNA nuclease, found in Bifidobacterium longum (strain DJO10A).